A 148-amino-acid polypeptide reads, in one-letter code: Large ribosomal subunit protein bL9 (148 aa).

It belongs to the bacterial ribosomal protein bL9 family.

Its function is as follows. Binds to the 23S rRNA. The sequence is that of Large ribosomal subunit protein bL9 from Frankia casuarinae (strain DSM 45818 / CECT 9043 / HFP020203 / CcI3).